We begin with the raw amino-acid sequence, 81 residues long: RNA-binding protein Hfq (81 aa).

The region spanning 9 to 68 (DPYLNILRKERVPVSIFLVNGIKLQGQIESFDQFVILLKNTVSQMVYKHAISTVVPSRTI) is the Sm domain.

Belongs to the Hfq family. As to quaternary structure, homohexamer.

Its function is as follows. RNA chaperone that binds small regulatory RNA (sRNAs) and mRNAs to facilitate mRNA translational regulation in response to envelope stress, environmental stress and changes in metabolite concentrations. Also binds with high specificity to tRNAs. In Marinomonas sp. (strain MWYL1), this protein is RNA-binding protein Hfq.